A 210-amino-acid chain; its full sequence is Cytochrome c biogenesis ATP-binding export protein CcmA (210 aa).

In terms of domain architecture, ABC transporter spans 1–208 (MHLNQLVISH…KVRTLSLDQF (208 aa)). Residue 38–45 (GHNGIGKT) participates in ATP binding.

It belongs to the ABC transporter superfamily. CcmA exporter (TC 3.A.1.107) family. As to quaternary structure, the complex is composed of two ATP-binding proteins (CcmA) and two transmembrane proteins (CcmB).

Its subcellular location is the cell inner membrane. It catalyses the reaction heme b(in) + ATP + H2O = heme b(out) + ADP + phosphate + H(+). Functionally, part of the ABC transporter complex CcmAB involved in the biogenesis of c-type cytochromes; once thought to export heme, this seems not to be the case, but its exact role is uncertain. Responsible for energy coupling to the transport system. This is Cytochrome c biogenesis ATP-binding export protein CcmA from Haemophilus ducreyi (strain 35000HP / ATCC 700724).